A 421-amino-acid chain; its full sequence is Medium-chain specific acyl-CoA dehydrogenase, mitochondrial (421 aa).

Residues 1-25 constitute a mitochondrion transit peptide; that stretch reads MAAAFRRGCRVLRSVSHFECRTQHS. K30 and K69 each carry N6-acetyllysine; alternate. N6-succinyllysine; alternate is present on residues K30 and K69. K79 carries the post-translational modification N6-acetyllysine. Residue 158-167 participates in FAD binding; sequence YCVTEPSAGS. S167 contributes to the octanoyl-CoA binding site. An N6-succinyllysine modification is found at K179. 191-193 contributes to the FAD binding site; the sequence is WIT. K212 is modified (N6-acetyllysine; alternate). K212 is modified (N6-succinyllysine; alternate). Residue S216 participates in octanoyl-CoA binding. Residues K217, K235, K259, and K271 each carry the N6-acetyllysine; alternate modification. An N6-succinyllysine; alternate mark is found at K217, K235, K259, and K271. The octanoyl-CoA site is built by D278 and R281. An N6-acetyllysine modification is found at K301. Residues 306-308 and 316-317 each bind FAD; these read RKT and HQ. R349 and T351 together coordinate octanoyl-CoA. Phosphothreonine is present on T351. 374-378 lines the FAD pocket; it reads QIFGG. E401 contacts octanoyl-CoA. Residue E401 is the Proton acceptor of the active site. An FAD-binding site is contributed by 402–405; sequence GTAQ.

The protein belongs to the acyl-CoA dehydrogenase family. As to quaternary structure, homotetramer. Interacts with the heterodimeric electron transfer flavoprotein ETF. FAD is required as a cofactor. Acetylated. Could occur at proximity of the cofactor-binding sites and reduce the catalytic activity. Could be deacetylated by SIRT3.

The protein localises to the mitochondrion matrix. The catalysed reaction is a medium-chain 2,3-saturated fatty acyl-CoA + oxidized [electron-transfer flavoprotein] + H(+) = a medium-chain (2E)-enoyl-CoA + reduced [electron-transfer flavoprotein]. The enzyme catalyses pentanoyl-CoA + oxidized [electron-transfer flavoprotein] + H(+) = (2E)-pentenoyl-CoA + reduced [electron-transfer flavoprotein]. It catalyses the reaction hexanoyl-CoA + oxidized [electron-transfer flavoprotein] + H(+) = (2E)-hexenoyl-CoA + reduced [electron-transfer flavoprotein]. It carries out the reaction octanoyl-CoA + oxidized [electron-transfer flavoprotein] + H(+) = (2E)-octenoyl-CoA + reduced [electron-transfer flavoprotein]. The catalysed reaction is decanoyl-CoA + oxidized [electron-transfer flavoprotein] + H(+) = (2E)-decenoyl-CoA + reduced [electron-transfer flavoprotein]. The enzyme catalyses dodecanoyl-CoA + oxidized [electron-transfer flavoprotein] + H(+) = (2E)-dodecenoyl-CoA + reduced [electron-transfer flavoprotein]. It catalyses the reaction tetradecanoyl-CoA + oxidized [electron-transfer flavoprotein] + H(+) = (2E)-tetradecenoyl-CoA + reduced [electron-transfer flavoprotein]. It carries out the reaction oxidized [electron-transfer flavoprotein] + hexadecanoyl-CoA + H(+) = (2E)-hexadecenoyl-CoA + reduced [electron-transfer flavoprotein]. It participates in lipid metabolism; mitochondrial fatty acid beta-oxidation. Medium-chain specific acyl-CoA dehydrogenase is one of the acyl-CoA dehydrogenases that catalyze the first step of mitochondrial fatty acid beta-oxidation, an aerobic process breaking down fatty acids into acetyl-CoA and allowing the production of energy from fats. The first step of fatty acid beta-oxidation consists in the removal of one hydrogen from C-2 and C-3 of the straight-chain fatty acyl-CoA thioester, resulting in the formation of trans-2-enoyl-CoA. Electron transfer flavoprotein (ETF) is the electron acceptor that transfers electrons to the main mitochondrial respiratory chain via ETF-ubiquinone oxidoreductase (ETF dehydrogenase). Among the different mitochondrial acyl-CoA dehydrogenases, medium-chain specific acyl-CoA dehydrogenase acts specifically on acyl-CoAs with saturated 6 to 12 carbons long primary chains. This Mus musculus (Mouse) protein is Medium-chain specific acyl-CoA dehydrogenase, mitochondrial.